A 135-amino-acid polypeptide reads, in one-letter code: Fluoride-specific ion channel FluC (135 aa).

4 helical membrane-spanning segments follow: residues 7-27 (IAAI…LGLA), 37-57 (IGTL…IAYV), 70-90 (FMIT…AELF), and 105-125 (LGLH…TIGL). Na(+)-binding residues include glycine 77 and serine 80.

It belongs to the fluoride channel Fluc/FEX (TC 1.A.43) family.

Its subcellular location is the cell inner membrane. It carries out the reaction fluoride(in) = fluoride(out). Its activity is regulated as follows. Na(+) is not transported, but it plays an essential structural role and its presence is essential for fluoride channel function. Its function is as follows. Fluoride-specific ion channel. Important for reducing fluoride concentration in the cell, thus reducing its toxicity. This is Fluoride-specific ion channel FluC from Xanthomonas oryzae pv. oryzae (strain MAFF 311018).